Reading from the N-terminus, the 270-residue chain is Tetraspanin-14 (270 aa).

The Cytoplasmic segment spans residues Met1–Tyr17. The chain crosses the membrane as a helical span at residues Leu18–Leu38. The Extracellular portion of the chain corresponds to Trp39 to Pro61. Residues Val62–Gly82 form a helical membrane-spanning segment. Over Ala83–Lys92 the chain is Cytoplasmic. A helical membrane pass occupies residues Phe93–Phe113. Residues Leu114–Asn232 lie on the Extracellular side of the membrane. The interval Leu114–Asn232 is necessary and sufficient for interaction with ADAM10. Disulfide bonds link Cys153–Cys221, Cys154–Cys186, Cys170–Cys180, and Cys187–Cys200. N-linked (GlcNAc...) asparagine glycosylation is present at Asn169. A helical membrane pass occupies residues Ile233–Leu253. Topologically, residues Ala254–Phe270 are cytoplasmic.

This sequence belongs to the tetraspanin (TM4SF) family. In terms of assembly, interacts with ADAM10; the interaction promotes ADAM10 maturation and cell surface expression.

It is found in the cell membrane. Functionally, part of TspanC8 subgroup, composed of 6 members that interact with the transmembrane metalloprotease ADAM10. This interaction is required for ADAM10 exit from the endoplasmic reticulum and for enzymatic maturation and trafficking to the cell surface as well as substrate specificity. Different TspanC8/ADAM10 complexes have distinct substrates. Negatively regulates ADAM10-mediated cleavage of GP6. Promotes ADAM10-mediated cleavage of CDH5. This Mus musculus (Mouse) protein is Tetraspanin-14 (Tspan14).